The chain runs to 63 residues: Large ribosomal subunit protein bL28 (63 aa).

Belongs to the bacterial ribosomal protein bL28 family.

The sequence is that of Large ribosomal subunit protein bL28 from Acidobacterium capsulatum (strain ATCC 51196 / DSM 11244 / BCRC 80197 / JCM 7670 / NBRC 15755 / NCIMB 13165 / 161).